A 163-amino-acid chain; its full sequence is Cytosolic iron-sulfur assembly component 2B (163 aa).

Belongs to the MIP18 family. Component of the CIA complex. Component of the MMXD complex, which includes CIAO1, ERCC2, CIAO2B, MMS19 and SLC25A5. Interacts with CIAO1, ERCC2 and MMS19; the interactions are direct. Interacts with KIF4A; the interaction facilitates the transfer of Fe-S clusters to KIF4A to ensure proper localization of KIF4A to the mitotic machinery. Interacts with CCDC117; the interaction is direct.

The protein resides in the nucleus. It localises to the cytoplasm. Its subcellular location is the cytoskeleton. The protein localises to the spindle. Component of the cytosolic iron-sulfur protein assembly (CIA) complex, a multiprotein complex that mediates the incorporation of iron-sulfur cluster into extramitochondrial Fe/S proteins. As a CIA complex component and in collaboration with CIAO1 and MMS19, binds to and facilitates the assembly of most cytosolic-nuclear Fe/S proteins. As part of the mitotic spindle-associated MMXD complex it plays a role in chromosome segregation, probably by facilitating iron-sulfur cluster assembly into ERCC2/XPD. Together with MMS19, facilitates the transfer of Fe-S clusters to the motor protein KIF4A, which ensures proper localization of KIF4A to mitotic machinery components to promote the progression of mitosis. The protein is Cytosolic iron-sulfur assembly component 2B of Mus musculus (Mouse).